The chain runs to 506 residues: Acetaldehyde dehydrogenase (506 aa).

Residues glutamate 262 and cysteine 301 contribute to the active site.

Belongs to the aldehyde dehydrogenase family.

It carries out the reaction acetaldehyde + NAD(+) + H2O = acetate + NADH + 2 H(+). It functions in the pathway alcohol metabolism; ethanol degradation; acetate from ethanol: step 2/2. Functionally, catalyzes the NAD(+)-dependent oxidation of acetaldehyde to acetate. Is likely a component of the ethanol oxidation system that allows P.aeruginosa to grow on ethanol as the sole carbon and energy source. This Pseudomonas aeruginosa protein is Acetaldehyde dehydrogenase.